The primary structure comprises 20 residues: Insulin-like growth factor-binding protein 2 (20 aa).

Positions 2–20 (LVFYCPKCTAERQTACPKL) constitute an IGFBP N-terminal domain.

In terms of assembly, binds IGF2 more than IGF1. In terms of processing, N-glycosylated.

It is found in the secreted. Its function is as follows. Inhibits IGF-mediated growth and developmental rates. IGF-binding proteins prolong the half-life of the IGFs and have been shown to either inhibit or stimulate the growth promoting effects of the IGFs on cell culture. They alter the interaction of IGFs with their cell surface receptors. The sequence is that of Insulin-like growth factor-binding protein 2 (igfbp2) from Oncorhynchus tshawytscha (Chinook salmon).